The primary structure comprises 859 residues: Transforming growth factor-beta receptor-associated protein 1 (859 aa).

Residues 24–297 (RGLLECVECC…HILQDFEGRV (274 aa)) enclose the CNH domain. The stretch at 563–727 (KRPLDEQQSG…LLAVYLGPGP (165 aa)) is one CHCR repeat.

This sequence belongs to the TRAP1 family. In terms of assembly, interacts with TGFBR2 and ACVR2B; in the absence of ligand stimulation. Interacts with TGFBR1, ACVRL1, BMPR1A and ACVR1B; in the absence of ligand stimulation and to a less extent. Interacts with SMAD4; the interaction seems to be mutually exclusive with the interaction of SMAD4 and phosphorylated SMAD2. May interact with ALOX5. Interacts with RAB5C. Interacts with VPS8, VPS11 and VPS16. Component of the putative class C core vacuole/endosome tethering (CORVET) complex; the core of which composed of the class C Vps proteins VPS11, VPS16, VPS18 and VPS33A, is associated with VPS8 and TGFBRAP1.

It is found in the cytoplasm. Its subcellular location is the early endosome. Its function is as follows. Plays a role in the TGF-beta/activin signaling pathway. It associates with inactive heteromeric TGF-beta and activin receptor complexes, mainly through the type II receptor, and is released upon activation of signaling. May recruit SMAD4 to the vicinity of the receptor complex and facilitate its interaction with receptor-regulated Smads, such as SMAD2. In terms of biological role, plays a role in vesicle-mediated protein trafficking of the endocytic membrane transport pathway. Believed to act as a component of the putative CORVET endosomal tethering complexes which is proposed to be involved in the Rab5-to-Rab7 endosome conversion probably implicating MON1A/B, and via binding SNAREs and SNARE complexes to mediate tethering and docking events during SNARE-mediated membrane fusion. The CORVET complex is proposed to function as a Rab5 effector to mediate early endosome fusion probably in specific endosome subpopulations. Functions predominantly in APPL1-containing endosomes and in degradative but not recycling trafficking of endocytosed cargo. This Bos taurus (Bovine) protein is Transforming growth factor-beta receptor-associated protein 1 (TGFBRAP1).